We begin with the raw amino-acid sequence, 682 residues long: uncharacterized protein (682 aa).

In terms of domain architecture, MCM spans 284–487 (VVNILADRLI…KDKDIAEYIV (204 aa)). 329-336 (TDPGIGKT) is an ATP binding site.

This sequence belongs to the MCM family.

This is an uncharacterized protein from Methanocaldococcus jannaschii (strain ATCC 43067 / DSM 2661 / JAL-1 / JCM 10045 / NBRC 100440) (Methanococcus jannaschii).